The sequence spans 708 residues: Lactotransferrin (708 aa).

An N-terminal signal peptide occupies residues 1 to 19 (MKLLFLALLSLLALGPSLA). 2 Transferrin-like domains span residues 25 to 352 (VRWC…NLKE) and 364 to 693 (VVWC…NLRQ). 2 disulfide bridges follow: Cys28–Cys64 and Cys38–Cys55. Asp79 is a binding site for Fe(3+). The active site involves Arg92. Tyr111 provides a ligand contact to Fe(3+). Disulfide bonds link Cys134–Cys217, Cys176–Cys192, Cys179–Cys202, Cys189–Cys200, and Cys250–Cys264. Thr136 lines the hydrogencarbonate pocket. N-linked (GlcNAc...) asparagine glycosylation occurs at Asn139. Hydrogencarbonate is bound by residues Arg140, Ala142, and Gly143. Tyr211 lines the Fe(3+) pocket. His272 contacts Fe(3+). The active-site Nucleophile is Ser278. 2 disulfides stabilise this stretch: Cys367/Cys399 and Cys377/Cys390. Residue Asn385 is glycosylated (N-linked (GlcNAc...) asparagine). Residues Asp414 and Asp452 each coordinate Fe(3+). 4 cysteine pairs are disulfide-bonded: Cys476–Cys551, Cys510–Cys524, Cys521–Cys534, and Cys592–Cys606. Hydrogencarbonate contacts are provided by Thr478, Arg482, Ala484, and Gly485. An N-linked (GlcNAc...) asparagine glycan is attached at Asn495. Residue Tyr545 coordinates Fe(3+). His614 is a Fe(3+) binding site.

The protein belongs to the transferrin family. In terms of assembly, monomer. Found in a complex with LTF, CLU, EPPIN and SEMG1. Interacts with prey activated coagulation factor X; the interaction inhibits coagulation factor X catalytic activity. Found in a complex with MPO and LTF; interacts directly with CP, allows Fe(3+) incorporation into LTF and activation of CP ferroxidase activity. N-glycosylated. Glycosylation is important for draculin anticoagulant activity. Probably also O-glycosylated. As to expression, expressed in the submaxillary gland and secreted in the saliva (at protein level).

The protein resides in the secreted. In terms of biological role, transferrins are iron binding transport proteins which can bind two Fe(3+) ions in association with the binding of an anion, usually bicarbonate. Functionally, major iron-binding and multifunctional protein found in exocrine fluids such as breast milk and mucosal secretions. Has antimicrobial activity. Antimicrobial properties may include bacteriostasis, which is related to its ability to sequester free iron and thus inhibit microbial growth, as well as direct bactericidal properties leading to the release of lipopolysaccharides from the bacterial outer membrane. May have anabolic, differentiating and anti-apoptotic effects on osteoblasts and may also inhibit osteoclastogenesis, possibly playing a role in the regulation of bone growth. May interfere with the lipopolysaccharide (LPS)-stimulated TLR4 signaling. Its function is as follows. The lactotransferrin transferrin-like domain 1 functions as a serine protease of the peptidase S60 family that cuts arginine rich regions. This function contributes to the antimicrobial activity. Shows a preferential cleavage at -Arg-Ser-Arg-Arg-|- and -Arg-Arg-Ser-Arg-|-, and of Z-Phe-Arg-|-aminomethylcoumarin sites. Acts as an anticoagulant of the blood coagulation cascade of the bat's prey by inhibiting coagulation factor IX and activated coagulation factor X. In Desmodus rotundus (Vampire bat), this protein is Lactotransferrin.